We begin with the raw amino-acid sequence, 479 residues long: Glutamate--tRNA ligase 2 (479 aa).

The 'HIGH' region motif lies at 10–20; that stretch reads PSPTGSLHIGG. A 'KMSKS' region motif is present at residues 243 to 247; that stretch reads KLSKR. Lys246 provides a ligand contact to ATP.

This sequence belongs to the class-I aminoacyl-tRNA synthetase family. Glutamate--tRNA ligase type 1 subfamily. Monomer.

Its subcellular location is the cytoplasm. The catalysed reaction is tRNA(Glu) + L-glutamate + ATP = L-glutamyl-tRNA(Glu) + AMP + diphosphate. Its function is as follows. Catalyzes the attachment of glutamate to tRNA(Glu) in a two-step reaction: glutamate is first activated by ATP to form Glu-AMP and then transferred to the acceptor end of tRNA(Glu). The protein is Glutamate--tRNA ligase 2 of Thermoanaerobacter pseudethanolicus (strain ATCC 33223 / 39E) (Clostridium thermohydrosulfuricum).